We begin with the raw amino-acid sequence, 911 residues long: DNA mismatch repair protein MutS (911 aa).

660-667 (GPNMAGKS) serves as a coordination point for ATP.

Belongs to the DNA mismatch repair MutS family.

Its function is as follows. This protein is involved in the repair of mismatches in DNA. It is possible that it carries out the mismatch recognition step. This protein has a weak ATPase activity. In Rhodopseudomonas palustris (strain HaA2), this protein is DNA mismatch repair protein MutS.